The primary structure comprises 74 residues: MKISYFLLLILSLGSSQINPVSGDDSIQCFQKNNTCHTNQCPYFQDEIGTCYDKRGKCCQKRLLHIRVPRKKKV.

The signal sequence occupies residues 1–23 (MKISYFLLLILSLGSSQINPVSG). 3 disulfide bridges follow: cysteine 29/cysteine 58, cysteine 36/cysteine 51, and cysteine 41/cysteine 59.

The protein belongs to the beta-defensin family. As to expression, only expressed in epididymis (caput, corpus and cauda).

It localises to the secreted. Functionally, has antibacterial activity. This Mus musculus (Mouse) protein is Beta-defensin 39 (Defb39).